The sequence spans 280 residues: 2,3,4,5-tetrahydropyridine-2,6-dicarboxylate N-succinyltransferase (280 aa).

This sequence belongs to the transferase hexapeptide repeat family.

The protein localises to the cytoplasm. It carries out the reaction (S)-2,3,4,5-tetrahydrodipicolinate + succinyl-CoA + H2O = (S)-2-succinylamino-6-oxoheptanedioate + CoA. It functions in the pathway amino-acid biosynthesis; L-lysine biosynthesis via DAP pathway; LL-2,6-diaminopimelate from (S)-tetrahydrodipicolinate (succinylase route): step 1/3. This Methylorubrum extorquens (strain PA1) (Methylobacterium extorquens) protein is 2,3,4,5-tetrahydropyridine-2,6-dicarboxylate N-succinyltransferase.